A 343-amino-acid polypeptide reads, in one-letter code: Flavone 3'-O-methyltransferase OMT2 (343 aa).

Residue Asn107 participates in (E)-ferulate binding. The S-adenosyl-L-homocysteine site is built by Gly184, Asp207, Asp227, Met228, Met240, and Lys241. Catalysis depends on His245, which acts as the Proton acceptor. Asp246 contributes to the (E)-5-hydroxyferulate binding site. Active-site residues include Glu273 and Glu305.

The protein belongs to the class I-like SAM-binding methyltransferase superfamily. Cation-independent O-methyltransferase family. COMT subfamily. Homodimer.

The catalysed reaction is (E)-5-hydroxyferulate + S-adenosyl-L-methionine = (E)-sinapate + S-adenosyl-L-homocysteine + H(+). It carries out the reaction luteolin + S-adenosyl-L-methionine = chrysoeriol + S-adenosyl-L-homocysteine + H(+). The enzyme catalyses quercetin + S-adenosyl-L-methionine = isorhamnetin + S-adenosyl-L-homocysteine + H(+). It catalyses the reaction (E)-caffeate + S-adenosyl-L-methionine = (E)-ferulate + S-adenosyl-L-homocysteine + H(+). The catalysed reaction is a 3'-hydroxyflavone + S-adenosyl-L-methionine = a 3'-methoxyflavone + S-adenosyl-L-homocysteine + H(+). It functions in the pathway flavonoid metabolism. Functionally, catalyzes the 3'-O-methylation of the flavonoids luteolin and quercetin. Catalyzes the 3- of 5-O-methylation of the phenylpropanoids caffeate and 5-hydroxyferulate. Substrate preference is 5-hydroxyferulate &gt; luteolin &gt; quercetin &gt; caffeate. Apigenin, kempferol and 3,4-dimethylquercetin do not seem to be substrates for methylation. The polypeptide is Flavone 3'-O-methyltransferase OMT2 (Chrysosplenium americanum (American golden saxifrage)).